Reading from the N-terminus, the 362-residue chain is 1-aminocyclopropane-1-carboxylate oxidase homolog 10 (362 aa).

Positions 211–310 (KGLFMLCHYY…RISVACFFSS (100 aa)) constitute a Fe2OG dioxygenase domain. The Fe cation site is built by His-235, Asp-237, and His-291. Residue Arg-301 participates in 2-oxoglutarate binding.

This sequence belongs to the iron/ascorbate-dependent oxidoreductase family. Fe(2+) serves as cofactor.

This is 1-aminocyclopropane-1-carboxylate oxidase homolog 10 from Arabidopsis thaliana (Mouse-ear cress).